The primary structure comprises 847 residues: Receptor-like protein 12 (847 aa).

The signal sequence occupies residues Met-1–Ala-27. Over Ser-28–Asn-798 the chain is Extracellular. N-linked (GlcNAc...) asparagine glycosylation is found at Asn-52, Asn-66, Asn-103, and Asn-132. LRR repeat units follow at residues Leu-109–Leu-133, His-135–Leu-157, Asn-158–Leu-181, Arg-183–Leu-205, Lys-206–Leu-229, Asn-231–Leu-253, Ile-254–Leu-277, Lys-279–Phe-301, His-302–Ile-325, Pro-326–Ser-350, Thr-351–Leu-374, Leu-375–Leu-398, Asn-400–Leu-422, Thr-424–Glu-442, Ala-443–Leu-466, Ser-467–Ser-491, Gly-492–Lys-514, Thr-516–Cys-539, Ala-541–Ser-562, Leu-563–Ile-587, Phe-589–Asn-613, Arg-657–Leu-681, Lys-682–Asn-704, Leu-705–Leu-729, and Phe-731–Arg-754. The N-linked (GlcNAc...) asparagine glycan is linked to Asn-180. N-linked (GlcNAc...) asparagine glycosylation is found at Asn-210 and Asn-228. Residues Asn-263, Asn-276, and Asn-289 are each glycosylated (N-linked (GlcNAc...) asparagine). The N-linked (GlcNAc...) asparagine glycan is linked to Asn-346. Asn-386 is a glycosylation site (N-linked (GlcNAc...) asparagine). An N-linked (GlcNAc...) asparagine glycan is attached at Asn-437. N-linked (GlcNAc...) asparagine glycans are attached at residues Asn-489 and Asn-503. The N-linked (GlcNAc...) asparagine glycan is linked to Asn-601. 2 N-linked (GlcNAc...) asparagine glycosylation sites follow: Asn-688 and Asn-704. Asn-736 carries N-linked (GlcNAc...) asparagine glycosylation. The helical transmembrane segment at Trp-799–Phe-819 threads the bilayer. The Cytoplasmic portion of the chain corresponds to Tyr-820 to Leu-847.

Belongs to the RLP family.

Its subcellular location is the cell membrane. Its function is as follows. Involved in the perception of CLV3 and CLV3-like peptides, that act as extracellular signals regulating meristems maintenance. In Arabidopsis thaliana (Mouse-ear cress), this protein is Receptor-like protein 12.